The primary structure comprises 106 residues: Nucleoid-associated protein XAC1110 (106 aa).

Basic and acidic residues predominate over residues 80–89 (KIDAESKDRM). The interval 80 to 106 (KIDAESKDRMGSATAGMQLPPGMKLPF) is disordered.

The protein belongs to the YbaB/EbfC family. Homodimer.

The protein localises to the cytoplasm. It localises to the nucleoid. Its function is as follows. Binds to DNA and alters its conformation. May be involved in regulation of gene expression, nucleoid organization and DNA protection. The sequence is that of Nucleoid-associated protein XAC1110 from Xanthomonas axonopodis pv. citri (strain 306).